The following is a 359-amino-acid chain: tRNA/tmRNA (uracil-C(5))-methyltransferase (359 aa).

The S-adenosyl-L-methionine site is built by Gln183, Tyr211, Asn216, Glu232, and Asp292. Catalysis depends on Cys317, which acts as the Nucleophile. Catalysis depends on Glu351, which acts as the Proton acceptor.

This sequence belongs to the class I-like SAM-binding methyltransferase superfamily. RNA M5U methyltransferase family. TrmA subfamily.

The enzyme catalyses uridine(54) in tRNA + S-adenosyl-L-methionine = 5-methyluridine(54) in tRNA + S-adenosyl-L-homocysteine + H(+). It carries out the reaction uridine(341) in tmRNA + S-adenosyl-L-methionine = 5-methyluridine(341) in tmRNA + S-adenosyl-L-homocysteine + H(+). Dual-specificity methyltransferase that catalyzes the formation of 5-methyluridine at position 54 (m5U54) in all tRNAs, and that of position 341 (m5U341) in tmRNA (transfer-mRNA). The chain is tRNA/tmRNA (uracil-C(5))-methyltransferase from Pseudomonas fluorescens (strain Pf0-1).